The following is a 311-amino-acid chain: Pyrimidine-specific ribonucleoside hydrolase RihA (311 aa).

Histidine 240 is an active-site residue.

It belongs to the IUNH family. RihA subfamily.

Hydrolyzes cytidine or uridine to ribose and cytosine or uracil, respectively. In Salmonella schwarzengrund (strain CVM19633), this protein is Pyrimidine-specific ribonucleoside hydrolase RihA.